The sequence spans 303 residues: Shikimate kinase 1, chloroplastic (303 aa).

The transit peptide at M1–S66 directs the protein to the chloroplast. G109–T116 provides a ligand contact to ATP. Position 116 (T116) interacts with Mg(2+). Residues D134, R159, and G181 each contribute to the substrate site. R220 provides a ligand contact to ATP.

Belongs to the shikimate kinase family. Homodimer. It depends on Mg(2+) as a cofactor.

Its subcellular location is the plastid. It localises to the chloroplast. The catalysed reaction is shikimate + ATP = 3-phosphoshikimate + ADP + H(+). It functions in the pathway metabolic intermediate biosynthesis; chorismate biosynthesis; chorismate from D-erythrose 4-phosphate and phosphoenolpyruvate: step 5/7. Functionally, catalyzes the specific phosphorylation of the 3-hydroxyl group of shikimic acid using ATP as a cosubstrate. The sequence is that of Shikimate kinase 1, chloroplastic (SK1) from Arabidopsis thaliana (Mouse-ear cress).